A 298-amino-acid chain; its full sequence is Aspartate carbamoyltransferase catalytic subunit (298 aa).

Arg-54 and Thr-55 together coordinate carbamoyl phosphate. Lys-82 is an L-aspartate binding site. Residues Arg-104, His-132, and Gln-135 each contribute to the carbamoyl phosphate site. The L-aspartate site is built by Arg-165 and Arg-218. Carbamoyl phosphate-binding residues include Gly-260 and Pro-261.

Belongs to the aspartate/ornithine carbamoyltransferase superfamily. ATCase family. In terms of assembly, heterododecamer (2C3:3R2) of six catalytic PyrB chains organized as two trimers (C3), and six regulatory PyrI chains organized as three dimers (R2).

The enzyme catalyses carbamoyl phosphate + L-aspartate = N-carbamoyl-L-aspartate + phosphate + H(+). It functions in the pathway pyrimidine metabolism; UMP biosynthesis via de novo pathway; (S)-dihydroorotate from bicarbonate: step 2/3. Functionally, catalyzes the condensation of carbamoyl phosphate and aspartate to form carbamoyl aspartate and inorganic phosphate, the committed step in the de novo pyrimidine nucleotide biosynthesis pathway. This Wolbachia sp. subsp. Brugia malayi (strain TRS) protein is Aspartate carbamoyltransferase catalytic subunit.